Here is a 267-residue protein sequence, read N- to C-terminus: Mitochondrial S-adenosylmethionine carrier protein (267 aa).

Solcar repeat units lie at residues 4–77, 86–168, and 177–265; these read REFT…TKSV, LAPI…LKAV, and LDSW…VRRT. Helical transmembrane passes span 5–25, 49–69, 85–105, 142–162, 182–202, and 238–258; these read EFTASLVAGGCAGMCVDLTLF, IYAGVPSAAIGSFPNAAAFFV, NLAPITHMLAASLGEIVACLI, RGYGSTVLREIPFSLVQFPLW, AAVCGALAGGVAAFVTTPLDV, and FAGSIPRVMFISMGGFIFLGA.

The protein belongs to the mitochondrial carrier (TC 2.A.29) family.

Its subcellular location is the mitochondrion inner membrane. It catalyses the reaction S-adenosyl-L-homocysteine(out) + S-adenosyl-L-methionine(in) = S-adenosyl-L-homocysteine(in) + S-adenosyl-L-methionine(out). Functionally, mitochondrial S-adenosyl-L-methionine/S-adenosyl-L-homocysteine antiporter. Mediates the exchange of cytosolic S-adenosyl-L-methionine, the predominant methyl-group donor for macromolecule methylation processes, for mitochondrial S-adenosylhomocysteine(SAH), a by-product of methylation reactions. This is Mitochondrial S-adenosylmethionine carrier protein (slc25a26) from Danio rerio (Zebrafish).